Here is a 238-residue protein sequence, read N- to C-terminus: ATP synthase subunit a (238 aa).

The next 5 helical transmembrane spans lie at 15–35 (IFNL…FVFI), 76–96 (YSLF…LGLM), 111–131 (PTAN…LTHI), 167–187 (LALR…LLLL), and 208–230 (AFSV…VYLG).

It belongs to the ATPase A chain family. In terms of assembly, F-type ATPases have 2 components, CF(1) - the catalytic core - and CF(0) - the membrane proton channel. CF(1) has five subunits: alpha(3), beta(3), gamma(1), delta(1), epsilon(1). CF(0) has three main subunits: a(1), b(2) and c(9-12). The alpha and beta chains form an alternating ring which encloses part of the gamma chain. CF(1) is attached to CF(0) by a central stalk formed by the gamma and epsilon chains, while a peripheral stalk is formed by the delta and b chains.

It localises to the cell membrane. Key component of the proton channel; it plays a direct role in the translocation of protons across the membrane. In Streptococcus pneumoniae (strain ATCC BAA-255 / R6), this protein is ATP synthase subunit a.